The sequence spans 434 residues: Septin-6 (434 aa).

An N-acetylalanine modification is found at Ala2. A Phosphoserine modification is found at Ser27. Residues 39–305 (QGFCFNILCV…ELYRRCKLEE (267 aa)) enclose the Septin-type G domain. A G1 motif region spans residues 49–56 (GETGLGKS). GTP is bound by residues 49 to 56 (GETGLGKS), Gly104, 185 to 193 (KSDAISKSE), Gly239, and Arg254. A G3 motif region spans residues 101–104 (STVG). A G4 motif region spans residues 184 to 187 (AKSD). The stretch at 321-407 (QETYEAKRNE…QRKAAAELLQ (87 aa)) forms a coiled coil. Residue Lys367 is modified to N6-acetyllysine. The segment at 403–434 (AELLQSQGSQAGGSQTLKRDKEKKNNPWLCIE) is disordered. Positions 407 to 417 (QSQGSQAGGSQ) are enriched in low complexity. Phosphoserine is present on Ser416. Thr418 is subject to Phosphothreonine.

The protein belongs to the TRAFAC class TrmE-Era-EngA-EngB-Septin-like GTPase superfamily. Septin GTPase family. Septins polymerize into heterooligomeric protein complexes that form filaments, and associate with cellular membranes, actin filaments and microtubules. GTPase activity is required for filament formation. Filaments are assembled from asymmetrical heterotrimers, composed of SEPTIN2, SEPTIN6 and SEPTIN7 that associate head-to-head to form a hexameric unit. Within the trimer, directly interacts with SEPTIN2 and SEPTIN7. Also interacts with SEPTIN9 and SEPTIN12. Interaction with SEPTIN12 alters filament structure. Component of a septin core octameric complex consisting of SEPTIN12, SEPTIN7, SEPTIN6 and SEPTIN2 or SEPTIN4 in the order 12-7-6-2-2-6-7-12 or 12-7-6-4-4-6-7-12 and located in the sperm annulus. Interacts with SOCS7. Interacts with HNRNPA1. In terms of tissue distribution, expressed in the cerebral cortex (at protein level). Associated with synaptic vesicles in various brain regions, including glomeruli of the olfactory bulb (at protein level).

The protein localises to the cytoplasm. It is found in the cytoskeleton. It localises to the spindle. The protein resides in the chromosome. Its subcellular location is the centromere. The protein localises to the kinetochore. It is found in the cleavage furrow. It localises to the midbody. The protein resides in the cell projection. Its subcellular location is the cilium. The protein localises to the flagellum. Filament-forming cytoskeletal GTPase. Required for normal organization of the actin cytoskeleton. Involved in cytokinesis. Forms a filamentous structure with SEPTIN12, SEPTIN6, SEPTIN2 and probably SEPTIN4 at the sperm annulus which is required for the structural integrity and motility of the sperm tail during postmeiotic differentiation. The polypeptide is Septin-6 (Mus musculus (Mouse)).